A 423-amino-acid chain; its full sequence is Mannose-6-phosphate isomerase (423 aa).

Residue Ala2 is modified to N-acetylalanine. Phosphoserine occurs at positions 102 and 108. The Zn(2+) site is built by Gln110, His112, Glu137, and His276. Arg295 is an active-site residue.

Belongs to the mannose-6-phosphate isomerase type 1 family. It depends on Zn(2+) as a cofactor.

The protein resides in the cytoplasm. It carries out the reaction D-mannose 6-phosphate = D-fructose 6-phosphate. The protein operates within nucleotide-sugar biosynthesis; GDP-alpha-D-mannose biosynthesis; alpha-D-mannose 1-phosphate from D-fructose 6-phosphate: step 1/2. Its function is as follows. Isomerase that catalyzes the interconversion of fructose-6-P and mannose-6-P and has a critical role in the supply of D-mannose derivatives required for many eukaryotic glycosylation reactions. This is Mannose-6-phosphate isomerase (MPI) from Bos taurus (Bovine).